A 231-amino-acid chain; its full sequence is Somatolactin (231 aa).

The first 24 residues, 1 to 24 (MLMFTAIQRGVWVALLWPHLLTAS), serve as a signal peptide directing secretion. 3 cysteine pairs are disulfide-bonded: Cys-29/Cys-39, Cys-89/Cys-205, and Cys-222/Cys-230. N-linked (GlcNAc...) asparagine glycans are attached at residues Asn-35 and Asn-145.

It belongs to the somatotropin/prolactin family. Pituitary gland.

It localises to the secreted. The polypeptide is Somatolactin (Siganus guttatus (Orange-spotted spinefoot)).